The sequence spans 330 residues: Polyprenal reductase (330 aa).

The Cytoplasmic segment spans residues 1–16 (MAGWAGFELSALNPLR). Residues 17–37 (TLWLALAAAFLFALLLQLAPA) form a helical membrane-spanning segment. Residues 38-80 (RLLPSCALFQDLLRYGKTKQSGSRRPAVCRAFDVPKRYFSHFY) are Lumenal-facing. The helical transmembrane segment at 81–101 (VISVVWNGSLLWLLSQSLFLG) threads the bilayer. Topologically, residues 102-132 (APFPNWLSALLRTLGATQFQALEMESKASRM) are cytoplasmic. A helical transmembrane segment spans residues 133–153 (PAAELALSAFLVLVFLWVHSL). Topologically, residues 154-169 (RRLFECFYVSVFSNAA) are lumenal. A helical transmembrane segment spans residues 170 to 190 (IHVVQYCFGLVYYVLVGLTVL). Over 191-206 (SQVPMDDKNVYVLGKN) the chain is Cytoplasmic. The chain crosses the membrane as a helical span at residues 207–227 (LLIQARWFHILGMVMFFWSSA). The Lumenal segment spans residues 228–277 (HQYKCHVILSNLRRNKKGVVIHCQHRIPFGDWFEYVSSANYLAELMIYIS). Residues 278–298 (MAVTFGLHNLTWWLVVTYVFS) traverse the membrane as a helical segment. At 299-330 (SQALSAFFNHKFYRSTFVSYPKHRKAFLPFLF) the chain is on the cytoplasmic side.

The protein belongs to the steroid 5-alpha reductase family. Polyprenal reductase subfamily.

The protein localises to the endoplasmic reticulum membrane. It carries out the reaction a di-trans,poly-cis-dolichal + NADP(+) = a di-trans,poly-cis-polyprenal + NADPH + H(+). The catalysed reaction is a 3-oxo-5alpha-steroid + NADP(+) = a 3-oxo-Delta(4)-steroid + NADPH + H(+). The enzyme catalyses androst-4-ene-3,17-dione + NADPH + H(+) = 5alpha-androstan-3,17-dione + NADP(+). It catalyses the reaction 17beta-hydroxy-5alpha-androstan-3-one + NADP(+) = testosterone + NADPH + H(+). It participates in protein modification; protein glycosylation. Plays a key role in early steps of protein N-linked glycosylation by being involved in the conversion of polyprenol into dolichol. Acts as a polyprenal reductase that mediates the reduction of polyprenal into dolichal in a NADP-dependent mechanism. Dolichols are required for the synthesis of dolichol-linked monosaccharides and the oligosaccharide precursor used for N-glycosylation. Also able to convert testosterone (T) into 5-alpha-dihydrotestosterone (DHT). In Mus musculus (Mouse), this protein is Polyprenal reductase.